The sequence spans 467 residues: ATP synthase subunit beta (467 aa).

152 to 159 (GGAGVGKT) contributes to the ATP binding site.

Belongs to the ATPase alpha/beta chains family. In terms of assembly, F-type ATPases have 2 components, CF(1) - the catalytic core - and CF(0) - the membrane proton channel. CF(1) has five subunits: alpha(3), beta(3), gamma(1), delta(1), epsilon(1). CF(0) has three main subunits: a(1), b(2) and c(9-12). The alpha and beta chains form an alternating ring which encloses part of the gamma chain. CF(1) is attached to CF(0) by a central stalk formed by the gamma and epsilon chains, while a peripheral stalk is formed by the delta and b chains.

The protein resides in the cell membrane. It catalyses the reaction ATP + H2O + 4 H(+)(in) = ADP + phosphate + 5 H(+)(out). Produces ATP from ADP in the presence of a proton gradient across the membrane. The catalytic sites are hosted primarily by the beta subunits. The sequence is that of ATP synthase subunit beta from Caldicellulosiruptor saccharolyticus (strain ATCC 43494 / DSM 8903 / Tp8T 6331).